The primary structure comprises 99 residues: Small ribosomal subunit protein bS20 (99 aa).

Belongs to the bacterial ribosomal protein bS20 family.

Functionally, binds directly to 16S ribosomal RNA. This Caldicellulosiruptor saccharolyticus (strain ATCC 43494 / DSM 8903 / Tp8T 6331) protein is Small ribosomal subunit protein bS20.